Here is a 274-residue protein sequence, read N- to C-terminus: Large ribosomal subunit protein uL2cz/uL2cy (274 aa).

Disordered regions lie at residues 1 to 22 (MAIH…DSQV) and 225 to 274 (PVDH…RRSK).

This sequence belongs to the universal ribosomal protein uL2 family. As to quaternary structure, part of the 50S ribosomal subunit.

It localises to the plastid. It is found in the chloroplast. This Arabis hirsuta (Hairy rock-cress) protein is Large ribosomal subunit protein uL2cz/uL2cy (rpl2-A).